The sequence spans 160 residues: Large ribosomal subunit protein uL10 (160 aa).

The protein belongs to the universal ribosomal protein uL10 family. Part of the ribosomal stalk of the 50S ribosomal subunit. The N-terminus interacts with L11 and the large rRNA to form the base of the stalk. The C-terminus forms an elongated spine to which L12 dimers bind in a sequential fashion forming a multimeric L10(L12)X complex.

Forms part of the ribosomal stalk, playing a central role in the interaction of the ribosome with GTP-bound translation factors. In Ehrlichia canis (strain Jake), this protein is Large ribosomal subunit protein uL10.